The sequence spans 49 residues: Light-harvesting protein B-875 beta chain (49 aa).

Topologically, residues 2–27 are cytoplasmic; the sequence is ADKSDLGYTGLTDEQAQELHSVYMSG. The a bacteriochlorophyll site is built by histidine 21 and histidine 39. Residues 28–45 form a helical; Signal-anchor for type II membrane protein membrane-spanning segment; it reads LWPFSAVAIVAHLAVYIW. Residues 46 to 49 lie on the Periplasmic side of the membrane; it reads RPWF.

Belongs to the antenna complex beta subunit family. The core complex is formed by different alpha and beta chains, binding bacteriochlorophyll molecules, and arranged most probably in tetrameric structures disposed around the reaction center. The non-pigmented gamma chains may constitute additional components.

It is found in the cell inner membrane. Antenna complexes are light-harvesting systems, which transfer the excitation energy to the reaction centers. The polypeptide is Light-harvesting protein B-875 beta chain (pufB) (Cereibacter sphaeroides (Rhodobacter sphaeroides)).